The primary structure comprises 170 residues: Flavodoxin (170 aa).

Residues 4–165 (IGLFFGTQTG…RIQAWVAQLK (162 aa)) enclose the Flavodoxin-like domain.

This sequence belongs to the flavodoxin family. It depends on FMN as a cofactor.

Low-potential electron donor to a number of redox enzymes. This Picosynechococcus sp. (strain ATCC 27264 / PCC 7002 / PR-6) (Agmenellum quadruplicatum) protein is Flavodoxin (isiB).